The following is a 353-amino-acid chain: Rhodopsin (353 aa).

Residues 1 to 36 (MNGTEGPYFYIPMVNTTGIVRSPYEYPQYYLVNPAA) lie on the Extracellular side of the membrane. Residues asparagine 2 and asparagine 15 are each glycosylated (N-linked (GlcNAc...) asparagine). A helical membrane pass occupies residues 37-61 (YAALGAYMFLLILVGFPINFLTLYV). Over 62–73 (TIEHKKLRTPLN) the chain is Cytoplasmic. Residues 74 to 96 (YILLNLAVANLFMVFGGFTTTMY) traverse the membrane as a helical segment. Residues 97–110 (TSMHGYFVLGRLGC) are Extracellular-facing. Cysteines 110 and 187 form a disulfide. The chain crosses the membrane as a helical span at residues 111–133 (NLEGFFATLGGEIALWSLVVLAI). A 'Ionic lock' involved in activated form stabilization motif is present at residues 134 to 136 (ERW). Residues 134–152 (ERWMVVCKPISNFRFGEDH) lie on the Cytoplasmic side of the membrane. The chain crosses the membrane as a helical span at residues 153-173 (AIMGLAFTWVMAAACAVPPLV). Over 174–202 (GWSRYIPEGMQCSCGIDYYTRAEGFNNES) the chain is Extracellular. The N-linked (GlcNAc...) asparagine glycan is linked to asparagine 200. A helical transmembrane segment spans residues 203–224 (FVIYMFVCHFLIPLVVVFFCYG). The Cytoplasmic segment spans residues 225–252 (RLLCAVKEAAAAQQESETTQRAEREVSR). The helical transmembrane segment at 253–274 (MVVIMVVAFLICWCPYAGVAWY) threads the bilayer. At 275-286 (IFTHQGSEFGPL) the chain is on the extracellular side. A helical membrane pass occupies residues 287 to 308 (FMTFPAFFAKSSSIYNPMIYIC). Position 296 is an N6-(retinylidene)lysine (lysine 296). The Cytoplasmic segment spans residues 309-353 (MNKQFRHCMITTLCCGKNPFEEEEGASTTSKTEASSVSSSSVSPA). S-palmitoyl cysteine attachment occurs at residues cysteine 322 and cysteine 323. The interval 330 to 353 (EEEGASTTSKTEASSVSSSSVSPA) is disordered. Residues 334 to 353 (ASTTSKTEASSVSSSSVSPA) show a composition bias toward low complexity.

Belongs to the G-protein coupled receptor 1 family. Opsin subfamily. Post-translationally, phosphorylated on some or all of the serine and threonine residues present in the C-terminal region. Contains one covalently linked retinal chromophore.

The protein resides in the membrane. It is found in the cell projection. Its subcellular location is the cilium. The protein localises to the photoreceptor outer segment. Photoreceptor required for image-forming vision at low light intensity. While most salt water fish species use retinal as chromophore, most freshwater fish use 3-dehydroretinal, or a mixture of retinal and 3-dehydroretinal. Light-induced isomerization of 11-cis to all-trans retinal triggers a conformational change that activates signaling via G-proteins. Subsequent receptor phosphorylation mediates displacement of the bound G-protein alpha subunit by arrestin and terminates signaling. This chain is Rhodopsin (rho), found in Chelon saliens (Leaping mullet).